Reading from the N-terminus, the 434-residue chain is Methylenetetrahydrofolate--tRNA-(uracil-5-)-methyltransferase TrmFO (434 aa).

10–15 contacts FAD; that stretch reads GAGLAG.

The protein belongs to the MnmG family. TrmFO subfamily. The cofactor is FAD.

The protein resides in the cytoplasm. The catalysed reaction is uridine(54) in tRNA + (6R)-5,10-methylene-5,6,7,8-tetrahydrofolate + NADH + H(+) = 5-methyluridine(54) in tRNA + (6S)-5,6,7,8-tetrahydrofolate + NAD(+). It carries out the reaction uridine(54) in tRNA + (6R)-5,10-methylene-5,6,7,8-tetrahydrofolate + NADPH + H(+) = 5-methyluridine(54) in tRNA + (6S)-5,6,7,8-tetrahydrofolate + NADP(+). Its function is as follows. Catalyzes the folate-dependent formation of 5-methyl-uridine at position 54 (M-5-U54) in all tRNAs. The protein is Methylenetetrahydrofolate--tRNA-(uracil-5-)-methyltransferase TrmFO of Bacillus cereus (strain G9842).